The sequence spans 604 residues: Elongation factor 4 (604 aa).

In terms of domain architecture, tr-type G spans Lys7 to Ser189. GTP contacts are provided by residues Asp19–Thr24 and Asn136–Asp139.

It belongs to the TRAFAC class translation factor GTPase superfamily. Classic translation factor GTPase family. LepA subfamily.

It is found in the cell membrane. The enzyme catalyses GTP + H2O = GDP + phosphate + H(+). Required for accurate and efficient protein synthesis under certain stress conditions. May act as a fidelity factor of the translation reaction, by catalyzing a one-codon backward translocation of tRNAs on improperly translocated ribosomes. Back-translocation proceeds from a post-translocation (POST) complex to a pre-translocation (PRE) complex, thus giving elongation factor G a second chance to translocate the tRNAs correctly. Binds to ribosomes in a GTP-dependent manner. The protein is Elongation factor 4 of Lachnospira eligens (strain ATCC 27750 / DSM 3376 / VPI C15-48 / C15-B4) (Eubacterium eligens).